Consider the following 91-residue polypeptide: Non-specific lipid-transfer protein P3 (91 aa).

4 disulfides stabilise this stretch: cysteine 3-cysteine 50, cysteine 13-cysteine 27, cysteine 28-cysteine 73, and cysteine 48-cysteine 87.

It is found in the secreted. In terms of biological role, plant non-specific lipid-transfer proteins transfer phospholipids as well as galactolipids across membranes. May play a role in wax or cutin deposition in the cell walls of expanding epidermal cells and certain secretory tissues. The protein is Non-specific lipid-transfer protein P3 of Vitis sp. (Grape).